We begin with the raw amino-acid sequence, 479 residues long: tRNA-2-methylthio-N(6)-dimethylallyladenosine synthase (479 aa).

The MTTase N-terminal domain maps to 6 to 122 (KTVYIKTVGC…IPDMLTKVTS (117 aa)). The [4Fe-4S] cluster site is built by cysteine 15, cysteine 51, cysteine 85, cysteine 172, cysteine 176, and cysteine 179. The Radical SAM core domain occupies 158–390 (RPTPFQAYLR…LAVQDRISKE (233 aa)). Positions 393–464 (QKLIGDTVEV…SHTLIGRVKT (72 aa)) constitute a TRAM domain.

Belongs to the methylthiotransferase family. MiaB subfamily. As to quaternary structure, monomer. It depends on [4Fe-4S] cluster as a cofactor.

The protein resides in the cytoplasm. It catalyses the reaction N(6)-dimethylallyladenosine(37) in tRNA + (sulfur carrier)-SH + AH2 + 2 S-adenosyl-L-methionine = 2-methylsulfanyl-N(6)-dimethylallyladenosine(37) in tRNA + (sulfur carrier)-H + 5'-deoxyadenosine + L-methionine + A + S-adenosyl-L-homocysteine + 2 H(+). Its function is as follows. Catalyzes the methylthiolation of N6-(dimethylallyl)adenosine (i(6)A), leading to the formation of 2-methylthio-N6-(dimethylallyl)adenosine (ms(2)i(6)A) at position 37 in tRNAs that read codons beginning with uridine. In Rhodopirellula baltica (strain DSM 10527 / NCIMB 13988 / SH1), this protein is tRNA-2-methylthio-N(6)-dimethylallyladenosine synthase.